Consider the following 317-residue polypeptide: Pinoresinol reductase 2 (317 aa).

10 residues coordinate NADP(+): T18, S20, L21, R41, K50, S90, G91, R95, N98, and S121. M125 is a (-)-pinoresinol binding site. NADP(+)-binding residues include K144 and F166. Residue K144 is the Proton acceptor of the active site. G178 lines the (-)-pinoresinol pocket.

It belongs to the NmrA-type oxidoreductase family. Isoflavone reductase subfamily. As to quaternary structure, forms homodimers. As to expression, expressed in roots. Detected in stems.

The enzyme catalyses (-)-lariciresinol + NADP(+) = (-)-pinoresinol + NADPH + H(+). Reductase involved in lignan biosynthesis. Unlike conventional pinoresinol reductases that can reduce both pinoresinol and lariciresinol, PRR2 shows a strict substrate selectivity for (-)-pinoresinol. No activity with (+)-pinoresinol or lariciresinol. Abstracts the 4R-hydride from the NADPH cofactor during catalysis. The sequence is that of Pinoresinol reductase 2 from Arabidopsis thaliana (Mouse-ear cress).